Here is a 347-residue protein sequence, read N- to C-terminus: Protein FAM50 homolog (347 aa).

The span at 77–113 (EDIVREREKKLAQKKEEKDREKLKALEAKQAEKDRQR) shows a compositional bias: basic and acidic residues. A disordered region spans residues 77-142 (EDIVREREKK…EDEEEPLEIK (66 aa)). Residues 123-138 (PEEDEESFDDEDEEEP) are compositionally biased toward acidic residues.

It belongs to the FAM50 family.

The sequence is that of Protein FAM50 homolog from Aedes aegypti (Yellowfever mosquito).